The following is a 125-amino-acid chain: Small ribosomal subunit protein uS13 (125 aa).

It belongs to the universal ribosomal protein uS13 family. Part of the 30S ribosomal subunit. Forms a loose heterodimer with protein S19. Forms two bridges to the 50S subunit in the 70S ribosome.

Located at the top of the head of the 30S subunit, it contacts several helices of the 16S rRNA. In the 70S ribosome it contacts the 23S rRNA (bridge B1a) and protein L5 of the 50S subunit (bridge B1b), connecting the 2 subunits; these bridges are implicated in subunit movement. Contacts the tRNAs in the A and P-sites. The chain is Small ribosomal subunit protein uS13 from Rickettsia felis (strain ATCC VR-1525 / URRWXCal2) (Rickettsia azadi).